The chain runs to 97 residues: uncharacterized protein (97 aa).

A disordered region spans residues 38–97; it reads TSPPDWNKFSGKVSINEPTTSKSKSKSTSTSTSTSTSTSTSTSTSSSTSSTSSTTSSINK. Residues 56–97 show a composition bias toward low complexity; that stretch reads TTSKSKSKSTSTSTSTSTSTSTSTSTSSSTSSTSSTTSSINK.

This is an uncharacterized protein from Dictyostelium discoideum (Social amoeba).